The primary structure comprises 38 residues: Histatin-1 (38 aa).

The tract at residues 1 to 38 (DSHEERHHGRHGHHKYGRKFHEKHHSHRGYRSNYLYDN) is disordered. Ser2 carries the post-translational modification Phosphoserine. A compositionally biased stretch (basic residues) spans 8–30 (HGRHGHHKYGRKFHEKHHSHRGY).

It belongs to the histatin/statherin family.

Its subcellular location is the secreted. Its function is as follows. Histatins (Hsts) are cationic and histidine-rich secreted peptides mainly synthesized by saliva glands of humans and higher primates. Hsts are considered to be major precursors of the protective proteinaceous structure on tooth surfaces (enamel pellicle). The polypeptide is Histatin-1 (HTN1) (Macaca fascicularis (Crab-eating macaque)).